Reading from the N-terminus, the 423-residue chain is Diaminobutyrate--2-oxoglutarate transaminase (423 aa).

Lys-271 bears the N6-(pyridoxal phosphate)lysine mark.

The protein belongs to the class-III pyridoxal-phosphate-dependent aminotransferase family. Requires pyridoxal 5'-phosphate as cofactor.

The catalysed reaction is L-2,4-diaminobutanoate + 2-oxoglutarate = L-aspartate 4-semialdehyde + L-glutamate. It functions in the pathway amine and polyamine biosynthesis; ectoine biosynthesis; L-ectoine from L-aspartate 4-semialdehyde: step 1/3. In terms of biological role, catalyzes reversively the conversion of L-aspartate beta-semialdehyde (ASA) to L-2,4-diaminobutyrate (DABA) by transamination with L-glutamate. The protein is Diaminobutyrate--2-oxoglutarate transaminase (ectB) of Streptomyces avermitilis (strain ATCC 31267 / DSM 46492 / JCM 5070 / NBRC 14893 / NCIMB 12804 / NRRL 8165 / MA-4680).